Consider the following 523-residue polypeptide: Probable malate:quinone oxidoreductase (523 aa).

Belongs to the MQO family. FAD serves as cofactor.

It carries out the reaction (S)-malate + a quinone = a quinol + oxaloacetate. It functions in the pathway carbohydrate metabolism; tricarboxylic acid cycle; oxaloacetate from (S)-malate (quinone route): step 1/1. The polypeptide is Probable malate:quinone oxidoreductase (Agrobacterium fabrum (strain C58 / ATCC 33970) (Agrobacterium tumefaciens (strain C58))).